The chain runs to 213 residues: Thiamine import ATP-binding protein ThiQ (213 aa).

Residues 1-212 (MIELNVTFDY…EQGRIVADQL (212 aa)) enclose the ABC transporter domain. 31–38 (GESGAGKS) provides a ligand contact to ATP.

Belongs to the ABC transporter superfamily. Thiamine importer (TC 3.A.1.19.1) family. The complex is composed of two ATP-binding proteins (ThiQ), two transmembrane proteins (ThiP) and a solute-binding protein (ThiB).

The protein localises to the cell inner membrane. The catalysed reaction is thiamine(out) + ATP + H2O = thiamine(in) + ADP + phosphate + H(+). In terms of biological role, part of the ABC transporter complex ThiBPQ involved in thiamine import. Responsible for energy coupling to the transport system. In Haemophilus ducreyi (strain 35000HP / ATCC 700724), this protein is Thiamine import ATP-binding protein ThiQ.